The chain runs to 448 residues: Methionine aminopeptidase 2 (448 aa).

Residues 1–17 (MPATAEAADAATQATDA) are compositionally biased toward low complexity. The tract at residues 1–87 (MPATAEAADA…QTEPPSIGLT (87 aa)) is disordered. Over residues 21–34 (KLEENKLPEGQERG) the composition is skewed to basic and acidic residues. Positions 35–46 (PEEEEDDDDDET) are enriched in acidic residues. Residues 55–71 (KKKKKKKSGAKKKKSKT) are compositionally biased toward basic residues. His200 contributes to the substrate binding site. A divalent metal cation is bound by residues Asp220, Asp231, and His300. His308 provides a ligand contact to substrate. A divalent metal cation-binding residues include Glu334 and Glu429.

It belongs to the peptidase M24A family. Methionine aminopeptidase eukaryotic type 2 subfamily. Co(2+) serves as cofactor. Requires Zn(2+) as cofactor. The cofactor is Mn(2+). It depends on Fe(2+) as a cofactor.

It is found in the cytoplasm. It catalyses the reaction Release of N-terminal amino acids, preferentially methionine, from peptides and arylamides.. Cotranslationally removes the N-terminal methionine from nascent proteins. The N-terminal methionine is often cleaved when the second residue in the primary sequence is small and uncharged (Met-Ala-, Cys, Gly, Pro, Ser, Thr, or Val). The sequence is that of Methionine aminopeptidase 2 from Malassezia globosa (strain ATCC MYA-4612 / CBS 7966) (Dandruff-associated fungus).